Here is a 416-residue protein sequence, read N- to C-terminus: cAMP-dependent protein kinase regulatory subunit (416 aa).

The interval 2–183 is dimerization and phosphorylation; the sequence is VSSLPKESQA…RLEKSIRNNF (182 aa). Residues serine 3, serine 4, serine 9, serine 68, serine 70, serine 74, serine 77, serine 79, serine 81, serine 83, and serine 84 each carry the phosphoserine modification. Residues 8-45 are dimerization/docking domain (D/D); sequence ESQAELQLFQNEINAANPSDFLQFSANYFNKRLEQQRA. A disordered region spans residues 65-138; the sequence is PEESFSRPQS…TSTPPLPMHF (74 aa). Residues 70 to 84 show a composition bias toward low complexity; that stretch reads SRPQSAQSQSRSRSS. The residue at position 129 (threonine 129) is a Phosphothreonine. Phosphoserine is present on serine 130. Phosphothreonine is present on residues threonine 131 and threonine 144. The Inhibitor sequence (IS) signature appears at 142-146; it reads RRTSV. At serine 145 the chain carries Phosphoserine; by autocatalysis. Serine 147 is modified (phosphoserine). Phosphothreonine is present on residues threonine 150 and threonine 160. Residues 184 to 301, glutamate 249, arginine 258, 302 to 416, glutamate 368, and arginine 377 each bind 3',5'-cyclic AMP; these read LFNK…KSMP and VLKS…PTRH.

The protein belongs to the cAMP-dependent kinase regulatory chain family. The inactive holoenzyme of cAMP-dependent protein kinase is a tetramer, composed of 2 regulatory subunits (R, encoded by BCY1) and two catalytic subunits (C, encoded by the 3 partially redundant TPK1, TPK2, and TPK3 genes). Activation by cAMP causes dissociation of the holoenzyme, producing 2 active catalytic monomers C and a regulatory dimer R(2). Phosphorylated by YAK1 in response to glucose starvation. Phosphorylated by MCK1 at Thr-129 upon TOR complex 1 (TORC1) inhibition. Thr-129 phosphorylation activates BCY1 to inhibit PKA. TORC1 inhibits phosphorylation of RxxS/T sites but has no effect on Ser-145 phosphorylation. The phosphorylation sites can be clustered in several groups, all localized in the N-terminal part. The first cluster termed cluster I (CI) is located close to the N-terminus and includes Ser-3, Ser-4 and Ser-9. The second includes Ser-68, Ser-70, Ser-74, Ser-77, Ser-79, Ser-81, Ser-83, and Ser-84. This cluster of phosphorylation sites, termed cluster II (CII), is important for BCY1 cytoplasmic localization and function. The third cluster of phosphorylated residues consists of Thr-144, Ser-145, Ser-147, Thr-150, and Thr-160. This cluster falls within or near the so-called autoinhibitory domain where the catalytic subunit of PKA autophosphorylates the highly conserved Ser-145 to inhibit BCY1. A last cluster of phosphorylated residues included Thr-129, Ser-130, and Thr-131 and is termed cluster III (CIII). Sites in CIII (and to a lesser extent in CII) are hyperphosphorylated in response to rapamycin.

It is found in the cytoplasm. The protein resides in the nucleus. Functionally, regulatory subunit of the cyclic AMP-dependent protein kinase (PKA), an effector of the Ras/cAMP pathway. Inhibits PKA activity in the absence of cAMP. cAMP activates PKA and promotes growth and proliferation in response to good nutrient conditions. Together with ZDS1, provides a negative feedback control on the cell wall integrity-signaling pathway by acting as a negative regulator of MAP kinase SLT2/MPK1. This Saccharomyces cerevisiae (strain ATCC 204508 / S288c) (Baker's yeast) protein is cAMP-dependent protein kinase regulatory subunit (BCY1).